We begin with the raw amino-acid sequence, 729 residues long: Ubiquitin carboxyl-terminal hydrolase BAP1 (729 aa).

Residues 4–235 (GWLELESDPG…IRFNLMAVVP (232 aa)) enclose the UCH catalytic domain. Positions 56 to 60 (RRSRR) match the Arg-finger motif motif. Residue Cys-91 is the Nucleophile of the active site. His-169 (proton donor) is an active-site residue. The residue at position 292 (Ser-292) is a Phosphoserine. Positions 301 to 351 (APAASEGNHTDGAEEAAGSCAQAPSHSPPNKPKLVVKPPGSSLNGVHPNPT) are disordered. An HBM-like motif motif is present at residues 363–366 (NHNY). 2 positions are modified to phosphoserine: Ser-369 and Ser-395. 2 disordered regions span residues 372–435 (QEEE…SADG) and 464–524 (SIKT…SPVT). Residues 395 to 409 (SDDEDDYEDDEEDDV) show a composition bias toward acidic residues. Polar residues predominate over residues 480–524 (THSQPSPTPSNESTDTASEIGSAFNSPLRSPIRSANPTRPSSPVT). Thr-493 bears the Phosphothreonine mark. Ser-521, Ser-537, Ser-585, and Ser-597 each carry phosphoserine. A disordered region spans residues 575-623 (LTEGGKGSSPSIRPIQGSQGSSSPVEKEVVEATDSREKTGMVRPGEPLS). Residues 582–598 (SSPSIRPIQGSQGSSSP) show a composition bias toward polar residues. The segment at 596-721 (SSPVEKEVVE…QRKPDRRKRS (126 aa)) is interaction with BRCA1. A compositionally biased stretch (basic and acidic residues) spans 599–614 (VEKEVVEATDSREKTG). The stretch at 636–656 (LKCVEAEIANYEACLKEEVEK) forms a coiled coil. Residues 642–686 (EIANYEACLKEEVEKRKKFKIDDQRRTHNYDEFICTFISMLAQEG) are interaction with YY1. One can recognise a ULD domain in the interval 670–698 (NYDEFICTFISMLAQEGMLANLVEQNISV). An interaction with nucleosomal DNA forming a DNA clamp with ASXL1 region spans residues 699–701 (RRR). A Classical bipartite Nuclear localization signal (NLS) motif is present at residues 699-722 (RRRQGVSIGRLHKQRKPDRRKRSR). The segment at 703–729 (GVSIGRLHKQRKPDRRKRSRPYKAKRQ) is disordered. The positively charged C-terminal extension (CTE) stretch occupies residues 713 to 729 (RKPDRRKRSRPYKAKRQ). The Non-classical PY-nuclear localization signal (PY-NLS) signature appears at 717–724 (RRKRSRPY).

This sequence belongs to the peptidase C12 family. BAP1 subfamily. Core component of the polycomb repressive deubiquitinase (PR-DUB) complex, at least composed of BAP1, one of ASXL1, ASXL2 or (probably) ASXL3, and one of MBD5 or MBD6. The PR-DUB core associates with a number of accessory proteins, including FOXK1, FOXK2, KDM1B, HCFC1, YY1 and OGT; KDM1B specifically associates with ASXL2 PR-DUB complexes. The BAP1 deubiquitinase activity is not required for PR-DUB assembly. Homodimerizes (via coiled-coil hinge-region between the UCH and ULD domains) to mediate assembly of 2 copies of the BAP1-ASXL heterodimer into a bisymmetric tetramer; dimerization enhances association with nucleosomes. The PR-DUB complex associates with nucleosomes to mediate deubiquitination of 'lys-120' of histone H2AK118ub1 substrates; the association requires the positively charged C-terminal tail of BAP1. Interacts (via ULD domain) with ASXL1 (via DEUBAD domain); the interaction is direct and forms a ubiquitin binding cleft. The interaction with ASXL1 stabilizes BAP1 but is not required for nucleosome binding. Associates (via C-terminus) with nucleosome and chromatosome complexes through direct interaction with DNA and the histone3/4 dimer; this association displaces the histone-2A C-terminal tail, extending and orienting the H2AK118ub1 substrate towards the BAP1 deubiquitinase active site. Also interacts (via arginine finger) directly with the histone H2A-H2B acidic patch; this interaction is not critical for nucleosome-chromatosome association but may play a role in orienting the H2AK118ub1 substrate towards the PR-DUB complex active site. Interacts with BRCA1 (via the RING finger). Interacts (via HBM-like motif) with HCFC1. Interacts (via a C-terminal region overlapping the ULD domain) with YY1; the interaction is direct and requires the interaction with HCFC1. Interacts (when phosphorylated at Thr-493) with FOXK1. Interacts (when phosphorylated at Thr-493) with FOXK2; leading to recruitment of the PR-DUB complex and repression of FOXK2 target genes. Interacts (via non-classical PY-NLS) with TNPO1/transportin-1 (via HEAT repeats 8-12); the interaction is direct, mediates BAP1 nuclear localization and disrupts BAP1 homodimerization. Interacts (via C-terminus) with KPNA1/importin alpha5 and KPNA2/importin alpha1; these interactions can contribute to BAP1 nuclear localization but are less important than the interaction with TNPO1/transportin-1. The interaction with TNPO1/transportin-1 disrupts homodimerization and blocks ubiquitination by UBE2O. In terms of processing, ubiquitinated: monoubiquitinated at multiple sites within its nuclear localization signal (NLS) BY UBE2O, leading to cytoplasmic retention. Able to mediate autodeubiquitination via intramolecular interactions to counteract cytoplasmic retention. Monoubiquitinated on at least 4 sites near or within its PY-NLS. In terms of tissue distribution, highly expressed in testis, placenta and ovary. Expressed in breast. levels in the placenta increase over the course of pregnancy.

It localises to the cytoplasm. Its subcellular location is the nucleus. It is found in the chromosome. It carries out the reaction Thiol-dependent hydrolysis of ester, thioester, amide, peptide and isopeptide bonds formed by the C-terminal Gly of ubiquitin (a 76-residue protein attached to proteins as an intracellular targeting signal).. Deubiquitinating enzyme that plays a key role in chromatin by mediating deubiquitination of histone H2A and HCFC1. Catalytic component of the polycomb repressive deubiquitinase (PR-DUB) complex, a complex that specifically mediates deubiquitination of histone H2A monoubiquitinated at 'Lys-120' (H2AK119ub1). Does not deubiquitinate monoubiquitinated histone H2B. The PR-DUB complex is an epigenetic regulator of gene expression and acts as a transcriptional coactivator, affecting genes involved in development, cell communication, signaling, cell proliferation and cell viability. Antagonizes PRC1 mediated H2AK119ub1 monoubiquitination. As part of the PR-DUB complex, associates with chromatin enriched in histone marks H3K4me1, H3K4me3, and H3K27Ac, but not in H3K27me3. Recruited to specific gene-regulatory regions by YY1. Acts as a regulator of cell growth by mediating deubiquitination of HCFC1 N-terminal and C-terminal chains, with some specificity toward 'Lys-48'-linked polyubiquitin chains compared to 'Lys-63'-linked polyubiquitin chains. Deubiquitination of HCFC1 does not lead to increase stability of HCFC1. Interferes with the BRCA1 and BARD1 heterodimer activity by inhibiting their ability to mediate ubiquitination and autoubiquitination. It however does not mediate deubiquitination of BRCA1 and BARD1. Able to mediate autodeubiquitination via intramolecular interactions to counteract monoubiquitination at the nuclear localization signal (NLS), thereby protecting it from cytoplasmic sequestration. Negatively regulates epithelial-mesenchymal transition (EMT) of trophoblast stem cells during placental development by regulating genes involved in epithelial cell integrity, cell adhesion and cytoskeletal organization. The chain is Ubiquitin carboxyl-terminal hydrolase BAP1 from Homo sapiens (Human).